Consider the following 1195-residue polypeptide: MGEEGPPSLEYIQAKDLFPPKELVKEEENLQVPFTVLQGEGVEFLGRAADALIAISNYRLHIKFKDSVINVPLRMIDSVESRDMFQLHISCKDSKVVRCHFSTFKQCQEWLSRLSRATARPAKPEDLFAFAYHAWCLGLTEEDQHTHLCQPGEHIRCRQEAELARMGFDLQNVWRVSHINSNYKLCPSYPQKLLVPVWITDKELENVASFRSWKRIPVVVYRHLRNGAAIARCSQPEISWWGWRNADDEYLVTSIAKACALDPGTRATGGSLSTGNNDTSEACDADFDSSLTACSGVESTAAPQKLLILDARSYTAAVANRAKGGGCECEEYYPNCEVVFMGMANIHAIRNSFQYLRAVCSQMPDPSNWLSALESTKWLQHLSVMLKAAVLVANTVDREGRPVLVHCSDGWDRTPQIVALAKILLDPYYRTLEGFQVLVESDWLDFGHKFGDRCGHQENVEDQNEQCPVFLQWLDSVHQLLKQFPCLFEFNEAFLVKLVQHTYSCLYGTFLANNPCEREKRNIYKRTCSVWALLRAGNKNFHNFLYTPSSDMVLHPVCHVRALHLWTAVYLPASSPCTLGEENMDLYLSPVAQSQEFSGRSLDRLPKTRSMDDLLSACDTSSPLTRTSSDPNLNNHCQEVRVGLEPWHSNPEGSETSFVDSGVGGPQQTVGEVGLPPPLPSSQKDYLSNKPFKSHKSCSPSYKLLNTAVPREMKSNTSDPEIKVLEETKGPAPDPSAQDELGRTLDGIGEPPEHCPETEAVSALSKVISNKCDGVCNFPESSQNSPTGTPQQAQPDSMLGVPSKCVLDHSLSTVCNPPSAACQTPLDPSTDFLNQDPSGSVASISHQEQLSSVPDLTHGEEDIGKRGNNRNGQLLENPRFGKMPLELVRKPISQSQISEFSFLGSNWDSFQGMVTSFPSGEATPRRLLSYGCCSKRPNSKQMRATGPCFGGQWAQREGVKSPVCSSHSNGHCTGPGGKNQMWLSSHPKQVSSTKPVPLNCPSPVPPLYLDDDGLPFPTDVIQHRLRQIEAGYKQEVEQLRRQVRELQMRLDIRHCCAPPAEPPMDYEDDFTCLKESDGSDTEDFGSDHSEDCLSEASWEPVDKKETEVTRWVPDHMASHCYNCDCEFWLAKRRHHCRNCGNVFCAGCCHLKLPIPDQQLYDPVLVCNSCYEHIQVSRARELMSQQLKKPIATASS.

At serine 8 the chain carries Phosphoserine. One can recognise a Myotubularin phosphatase domain in the interval 153–570; sequence EHIRCRQEAE…RALHLWTAVY (418 aa). 3 residues coordinate a 1,2-diacyl-sn-glycero-3-phospho-(1D-myo-inositol-3,5-bisphosphate): asparagine 320, asparagine 345, and isoleucine 346. A 1,2-diacyl-sn-glycero-3-phospho-(1D-myo-inositol-3-phosphate) contacts are provided by asparagine 320, asparagine 345, and isoleucine 346. Catalysis depends on cysteine 407, which acts as the Phosphocysteine intermediate. Positions 408, 409, 410, 411, 412, 413, 449, and 453 each coordinate a 1,2-diacyl-sn-glycero-3-phospho-(1D-myo-inositol-3,5-bisphosphate). Residues serine 408, aspartate 409, glycine 410, tryptophan 411, aspartate 412, and arginine 413 each coordinate a 1,2-diacyl-sn-glycero-3-phospho-(1D-myo-inositol-3-phosphate). A 1,2-diacyl-sn-glycero-3-phospho-(1D-myo-inositol-3-phosphate) is bound at residue arginine 453. Serine 610 and serine 629 each carry phosphoserine. 3 disordered regions span residues 645–756, 780–800, and 827–877; these read EPWH…EHCP, ESSQNSPTGTPQQAQPDSMLG, and DPST…LLEN. Basic and acidic residues predominate over residues 720-729; sequence PEIKVLEETK. Polar residues-rich tracts occupy residues 780–795 and 831–854; these read ESSQNSPTGTPQQAQP and DFLNQDPSGSVASISHQEQLSSVP. Residues 1004 to 1008 carry the PY-motif; substrate motif for NEDD4 motif; it reads VPPLY. Residues 1023–1055 are a coiled coil; the sequence is HRLRQIEAGYKQEVEQLRRQVRELQMRLDIRHC. Residues 1114-1174 form an FYVE-type zinc finger; that stretch reads DHMASHCYNC…VCNSCYEHIQ (61 aa). The Zn(2+) site is built by cysteine 1120, cysteine 1123, cysteine 1136, cysteine 1139, cysteine 1144, cysteine 1147, cysteine 1166, and cysteine 1169.

This sequence belongs to the protein-tyrosine phosphatase family. Non-receptor class myotubularin subfamily. Homooligomeric. Forms MTMR3:MTMR4 heterooligomers; regulates the localization of both proteins. The MTMR3:MTMR4 heterooligomer can also recruit both CEP55 and PLK1; occurs during early mitosis, regulates the phosphorylation of CEP55 by PLK1 and its recruitment to the midbody where it can mediate cell abscission. Interacts with SMAD2 and SMAD3; negatively regulates TGF-beta signaling through SMAD2 and SMAD3 dephosphorylation and retention in endosomes. Interacts with SMAD1; negatively regulates BMP signaling through SMAD1 dephosphorylation and retention in endosomes. In terms of processing, ubiquitinated. Ubiquitination by NEDD4 probably leads to proteasomal degradation. Post-translationally, phosphorylated by CDK1 during mitosis. As to expression, expressed in brain, heart, kidney, spleen, liver, colon, testis, muscle, placenta, thyroid gland, pancreas, ovary, prostate, skin, peripheral blood, and bone marrow.

The protein resides in the early endosome membrane. The protein localises to the recycling endosome membrane. Its subcellular location is the late endosome membrane. It localises to the cytoplasmic vesicle. It is found in the phagosome membrane. The catalysed reaction is a 1,2-diacyl-sn-glycero-3-phospho-(1D-myo-inositol-3-phosphate) + H2O = a 1,2-diacyl-sn-glycero-3-phospho-(1D-myo-inositol) + phosphate. It carries out the reaction a 1,2-diacyl-sn-glycero-3-phospho-(1D-myo-inositol-3,5-bisphosphate) + H2O = a 1,2-diacyl-sn-glycero-3-phospho-(1D-myo-inositol-5-phosphate) + phosphate. It catalyses the reaction 1,2-dioctanoyl-sn-glycero-3-phospho-(1-D-myo-inositol-3-phosphate) + H2O = 1,2-dioctanoyl-sn-glycero-3-phospho-(1D-myo-inositol) + phosphate. The enzyme catalyses 1,2-dioctanoyl-sn-glycero-3-phospho-(1D-myo-inositol-3,5-bisphosphate) + H2O = 1,2-dioctanoyl-sn-glycero-3-phospho-(1D-myo-inositol-5-phosphate) + phosphate. Its activity is regulated as follows. The phosphatidylinositol-3-phosphate phosphatase activity is inhibited by vanadate. Functionally, lipid phosphatase that specifically dephosphorylates the D-3 position of phosphatidylinositol 3-phosphate and phosphatidylinositol 3,5-bisphosphate, generating phosphatidylinositol and phosphatidylinositol 5-phosphate. Decreases the levels of phosphatidylinositol 3-phosphate, a phospholipid found in cell membranes where it acts as key regulator of both cell signaling and intracellular membrane traffic, in a subset of endosomal membranes to negatively regulate both endocytic recycling and trafficking and/or maturation of endosomes toward lysosomes. Through phosphatidylinositol 3-phosphate turnover in phagosome membranes regulates phagocytosis and phagosome maturation. By decreasing phosphatidylinositol 3-monophosphate (PI3P) levels in immune cells it can also regulate the innate immune response. Beside its lipid phosphatase activity, can also function as a molecular adapter to regulate midbody abscission during mitotic cytokinesis. Can also negatively regulate TGF-beta and BMP signaling through Smad proteins dephosphorylation and retention in endosomes. The polypeptide is Phosphatidylinositol-3,5-bisphosphate 3-phosphatase MTMR4 (Homo sapiens (Human)).